An 83-amino-acid polypeptide reads, in one-letter code: Toxin BmKBT (83 aa).

The first 19 residues, 1–19 (MKAALLLVIFSLMLIGVLT), serve as a signal peptide directing secretion. Positions 21–81 (KSGYPTDHEG…TWSRATNKCR (61 aa)) constitute an LCN-type CS-alpha/beta domain. Intrachain disulfides connect C31/C80, C35/C54, C41/C61, and C45/C63. Position 83 (K83) is a propeptide, removed by a carboxypeptidase.

The protein belongs to the long (4 C-C) scorpion toxin superfamily. Sodium channel inhibitor family. Beta subfamily. In terms of tissue distribution, expressed by the venom gland.

The protein localises to the secreted. Its function is as follows. This toxin increases the peak sodium current, slows down the inactivation of sodium channels (Nav), and prolongs the action potential of dorsal root ganglion neurons, which indicates that it behaves as a classical alpha-toxin. It binds to mammal brain and insect sodium channels, but with a different manner. This peptide may bind to a distinct receptor site on mammal brain sodium channels, which is unconnected with that for BmKAS (a beta-toxin), BmKIT2 (a beta-toxin) or BmK I (an alpha toxin). In contrast, the receptor site for BmKabT on insect sodium channels might be closely related to that for the beta-insect depressant toxin BmKIT2. Possesses potent toxicity in mice but induces only paralysis in cotton bollworm. In Olivierus martensii (Manchurian scorpion), this protein is Toxin BmKBT.